The sequence spans 256 residues: Polycomb group RING finger protein 5 (256 aa).

The RING-type zinc finger occupies C18–G57. Basic and acidic residues-rich tracts occupy residues E94–P103 and D110–D120. Residues E94–H133 form a disordered region.

Component of a PRC1-like complex that contains PCGF5, RNF2 and UBE2D3. Interacts with RNF2; the interaction is direct. Interacts with CBX6, CBX7 and CBX8. Interacts with AUTS2; the interaction is direct. Identified in a complex that contains AUTS2, PCGF5, CSNK2B and RNF2.

The protein resides in the nucleus. The protein localises to the nucleoplasm. Functionally, component of a Polycomb group (PcG) multiprotein PRC1-like complex, a complex class required to maintain the transcriptionally repressive state of many genes, including Hox genes, throughout development. PcG PRC1 complex acts via chromatin remodeling and modification of histones; it mediates monoubiquitination of histone H2A 'Lys-119', rendering chromatin heritably changed in its expressibility. Within the PRC1-like complex, regulates RNF2 ubiquitin ligase activity. Plays a redundant role with PCGF3 as part of a PRC1-like complex that mediates monoubiquitination of histone H2A 'Lys-119' on the X chromosome and is required for normal silencing of one copy of the X chromosome in XX females. This Homo sapiens (Human) protein is Polycomb group RING finger protein 5 (PCGF5).